Reading from the N-terminus, the 467-residue chain is Dimethylamine methyltransferase MtbB3 (467 aa).

A non-standard amino acid (pyrrolysine) is located at residue O356.

The protein belongs to the dimethylamine methyltransferase family.

It carries out the reaction Co(I)-[dimethylamine-specific corrinoid protein] + dimethylamine + H(+) = methyl-Co(III)-[dimethylamine-specific corrinoid protein] + methylamine. The protein operates within one-carbon metabolism; methanogenesis from dimethylamine. Catalyzes the transfer of a methyl group from dimethylamine to the corrinoid cofactor of MtbC. In Methanosarcina mazei (strain ATCC BAA-159 / DSM 3647 / Goe1 / Go1 / JCM 11833 / OCM 88) (Methanosarcina frisia), this protein is Dimethylamine methyltransferase MtbB3 (mtbB3).